Consider the following 396-residue polypeptide: MAKAKFERNKPHCNIGTIGHVDHGKTSLTAAITKILAETGGATFTAYDQIDKAPEEKARGITISTAHVEYETKNRHYAHVDCPGHADYVKNMITGAAQMDGAILVVSAADGPMPQTREHILLARQVGVPALVVFLNKCDMVDDPELLELVELEVRELLSKYEFPGDKIPIIKGSALAALEDSDKKLGHDAILELMRNVDEYIPQPERPIDQPFLMPVEDVFSISGRGTVVTGRVERGIVKVGEEIEIVGLRATQKTTVTGVEMFRKLLDQGQAGDNIGALLRGTKREDVERGQVLAKPGSVKPHTKFKAEAYILTKEEGGRHTPFFTNYRPQFYFRTTDVTGVVHLPEGTEMVMPGDNIAMEVHLIVPIAMEEKLRFAIREGGRTVGAGVVASIIE.

In terms of domain architecture, tr-type G spans 10–206 (KPHCNIGTIG…NVDEYIPQPE (197 aa)). Positions 19-26 (GHVDHGKT) are G1. 19–26 (GHVDHGKT) is a binding site for GTP. Thr26 contacts Mg(2+). The interval 60–64 (GITIS) is G2. The G3 stretch occupies residues 81–84 (DCPG). Residues 81 to 85 (DCPGH) and 136 to 139 (NKCD) contribute to the GTP site. The interval 136 to 139 (NKCD) is G4. Residues 174–176 (SAL) are G5.

Belongs to the TRAFAC class translation factor GTPase superfamily. Classic translation factor GTPase family. EF-Tu/EF-1A subfamily. In terms of assembly, monomer.

The protein localises to the cytoplasm. The catalysed reaction is GTP + H2O = GDP + phosphate + H(+). Functionally, GTP hydrolase that promotes the GTP-dependent binding of aminoacyl-tRNA to the A-site of ribosomes during protein biosynthesis. The chain is Elongation factor Tu from Bradyrhizobium diazoefficiens (strain JCM 10833 / BCRC 13528 / IAM 13628 / NBRC 14792 / USDA 110).